The chain runs to 164 residues: Peptidyl-prolyl cis-trans isomerase A (164 aa).

Met1 carries the post-translational modification N-acetylmethionine. Val2 carries the post-translational modification N-acetylvaline; in Peptidyl-prolyl cis-trans isomerase A, N-terminally processed. One can recognise a PPIase cyclophilin-type domain in the interval 7-163; it reads FFDISADGEP…KKITISDCGQ (157 aa). Lys28 carries the post-translational modification N6-acetyllysine; alternate. Lys28 is covalently cross-linked (Glycyl lysine isopeptide (Lys-Gly) (interchain with G-Cter in SUMO2); alternate). A Glycyl lysine isopeptide (Lys-Gly) (interchain with G-Cter in ubiquitin); alternate cross-link involves residue Lys28. Lys44 is subject to N6-acetyllysine. Ser77 is modified (phosphoserine). Position 82 is an N6-acetyllysine; alternate (Lys82). A Glycyl lysine isopeptide (Lys-Gly) (interchain with G-Cter in SUMO2); alternate cross-link involves residue Lys82. Thr93 is modified (phosphothreonine). N-linked (GlcNAc...) asparagine glycosylation is present at Asn108. N6-acetyllysine occurs at positions 125, 131, and 133.

The protein belongs to the cyclophilin-type PPIase family. PPIase A subfamily. Interacts with protein phosphatase PPP3CA/calcineurin A. Interacts with PRPF19 isoform 2 (via N-terminus). Interacts with isoform 2 of BSG/CD147. Interacts with FOXO1; the interaction promotes FOXO1 dephosphorylation, nuclear accumulation and transcriptional activity. Interacts with integrin ITGA2B:ITGB3; the interaction is ROS and peptidyl-prolyl cis-trans isomerase (PPIase) activity-dependent and is increased in the presence of thrombin. Interacts with MAP3K5. Interacts with TARDBP; the interaction is dependent on the RNA-binding activity of TARDBP and the PPIase activity of PPIA/CYPA and the acetylation of PPIA/CYPA at Lys-125 favors the interaction. Interacts with HNRNPA1, HNRNPA2B1, HNRNPC, RBMX, HNRNPK and HNRNPM. In terms of processing, acetylation at Lys-125 markedly inhibits catalysis of cis to trans isomerization. PPIA acetylation also antagonizes the immunosuppressive effects of cyclosporine by inhibiting the sequential steps of cyclosporine binding and calcineurin inhibition. Acetylation at Lys-125 favors the interaction with TARDBP.

The protein localises to the cytoplasm. It is found in the secreted. Its subcellular location is the nucleus. It carries out the reaction [protein]-peptidylproline (omega=180) = [protein]-peptidylproline (omega=0). Binds cyclosporin A (CsA). CsA mediates some of its effects via an inhibitory action on PPIase. In terms of biological role, catalyzes the cis-trans isomerization of proline imidic peptide bonds in oligopeptides. Exerts a strong chemotactic effect on leukocytes partly through activation of one of its membrane receptors BSG/CD147, initiating a signaling cascade that culminates in MAPK/ERK activation. Activates endothelial cells (ECs) in a proinflammatory manner by stimulating activation of NF-kappa-B and ERK, JNK and p38 MAP-kinases and by inducing expression of adhesion molecules including SELE and VCAM1. Induces apoptosis in ECs by promoting the FOXO1-dependent expression of CCL2 and BCL2L11 which are involved in EC chemotaxis and apoptosis. In response to oxidative stress, initiates proapoptotic and antiapoptotic signaling in ECs via activation of NF-kappa-B and AKT1 and up-regulation of antiapoptotic protein BCL2. Negatively regulates MAP3K5/ASK1 kinase activity, autophosphorylation and oxidative stress-induced apoptosis mediated by MAP3K5/ASK1. Necessary for the assembly of TARDBP in heterogeneous nuclear ribonucleoprotein (hnRNP) complexes and regulates TARDBP binding to RNA UG repeats and TARDBP-dependent expression of HDAC6, ATG7 and VCP which are involved in clearance of protein aggregates. Plays an important role in platelet activation and aggregation. Regulates calcium mobilization and integrin ITGA2B:ITGB3 bidirectional signaling via increased ROS production as well as by facilitating the interaction between integrin and the cell cytoskeleton. Binds heparan sulfate glycosaminoglycans. In Cricetulus griseus (Chinese hamster), this protein is Peptidyl-prolyl cis-trans isomerase A (PPIA).